We begin with the raw amino-acid sequence, 228 residues long: MHKIAAAPPPSATPGGGLETPLAAPKYGTLIPNRIFVGGISGDTTEADLTRVFSAYGTVKSTKIIVDRAGVSKGYGFVTFETEQEAQRLQADGECVVLRDRKLNIAPAIKKQPNPLQSIVATNGAVYYTTTPPAPISNIPMDQFAAAVYPPAAGVPAIYPPSAMQYQPFYQYYSVPMNVPTIWPQNYQENHSPLLHSPTSNPHSPHSQSHPQSPCWSIEDLRDTLPRV.

Positions 33–110 constitute an RRM domain; that stretch reads NRIFVGGISG…RKLNIAPAIK (78 aa). Positions 151-178 constitute a DAZ domain; that stretch reads PAAGVPAIYPPSAMQYQPFYQYYSVPMN. Residues 193–214 show a composition bias toward low complexity; sequence PLLHSPTSNPHSPHSQSHPQSP. Residues 193 to 228 are disordered; sequence PLLHSPTSNPHSPHSQSHPQSPCWSIEDLRDTLPRV. Residues 219–228 are compositionally biased toward basic and acidic residues; it reads EDLRDTLPRV.

The protein belongs to the RRM DAZ family. Interacts with the translational regulator orb2. In terms of tissue distribution, testis specific.

Its subcellular location is the nucleus. The protein localises to the cytoplasm. Functionally, RNA-binding protein that plays a central role in spermatogenesis. Required for meiotic entry and germline differentiation, at the transition between G2 and M phases of meiosis I. Acts by regulating translation of specific mRNAs, possibly by binding to their 3'-UTR. Essential for translation of twine (twe) mRNA. Required for the expression of various genes such as CG6784, CG17210, CG15841 scpr-B, scpr-C, and rho-6. The sequence is that of Protein boule (bol) from Drosophila melanogaster (Fruit fly).